A 131-amino-acid polypeptide reads, in one-letter code: MEETMNNQEAPETSEEETVAVENTKAEKVLPNFGPGDTIKVHARIKEGDKERIQMFQGVVLKVKQAADGGNFTVRRISYGVGVERTFPFLSPNVTKVEIMKKGRVRRARLFYLRKLSGKAARIKEVKQTPS.

The segment covering 1–11 has biased composition (polar residues); the sequence is MEETMNNQEAP. The tract at residues 1–20 is disordered; it reads MEETMNNQEAPETSEEETVA.

It belongs to the bacterial ribosomal protein bL19 family.

This protein is located at the 30S-50S ribosomal subunit interface and may play a role in the structure and function of the aminoacyl-tRNA binding site. In Dehalococcoides mccartyi (strain ATCC BAA-2100 / JCM 16839 / KCTC 5957 / BAV1), this protein is Large ribosomal subunit protein bL19.